Consider the following 307-residue polypeptide: Upstream stimulatory factor 1 (307 aa).

Disordered stretches follow at residues 104–131 and 168–207; these read DDNG…SVGG and QGGS…VERR. The span at 122–131 shows a compositional bias: low complexity; sequence PTDSSTSVGG. The span at 187 to 207 shows a compositional bias: basic and acidic residues; it reads DGPRTTRDDKRRAQHNEVERR. The 56-residue stretch at 196–251 folds into the bHLH domain; that stretch reads KRRAQHNEVERRRRDKINNWIVQLSKIIPDCSMESTKTGQSKGGILSKACDYIQEL. A leucine-zipper region spans residues 268 to 289; it reads LQMDNEVLRQQVEDLKNNNLTL.

In terms of assembly, efficient DNA binding requires dimerization with another bHLH protein. Binds DNA as a homodimer or a heterodimer. Oocyte and somatic tissue. Oocytic and somatic forms of this protein exist, probably as a result of post-translational modifications or minor splicing differences.

Its subcellular location is the nucleus. Its function is as follows. May act as a regulator of transcription factor IIIA (TFIIIA) gene expression. The sequence is that of Upstream stimulatory factor 1 (usf1) from Xenopus borealis (Kenyan clawed frog).